The sequence spans 1050 residues: DNA-directed RNA polymerase subunit beta (1050 aa).

The protein belongs to the RNA polymerase beta chain family. As to quaternary structure, in plastids the minimal PEP RNA polymerase catalytic core is composed of four subunits: alpha, beta, beta', and beta''. When a (nuclear-encoded) sigma factor is associated with the core the holoenzyme is formed, which can initiate transcription (Potential).

The protein localises to the plastid. The protein resides in the apicoplast. It carries out the reaction RNA(n) + a ribonucleoside 5'-triphosphate = RNA(n+1) + diphosphate. DNA-dependent RNA polymerase catalyzes the transcription of DNA into RNA using the four ribonucleoside triphosphates as substrates. This chain is DNA-directed RNA polymerase subunit beta (rpoB), found in Neospora caninum (Coccidian parasite).